The chain runs to 380 residues: Chaperone protein DnaJ (380 aa).

In terms of domain architecture, J spans 5 to 72; that stretch reads DYYETLGVAK…QKRAAYDQYG (68 aa). A CR-type zinc finger spans residues 140–218; the sequence is GKDTQIRIPS…CNGAGRIKSN (79 aa). Residues C153, C156, C170, C173, C192, C195, C206, and C209 each coordinate Zn(2+). CXXCXGXG motif repeat units lie at residues 153 to 160, 170 to 177, 192 to 199, and 206 to 213; these read CSTCDGTG, CPTCSGSG, CPSCHGTG, and CTACNGAG. The interval 357–380 is disordered; that stretch reads LKKGGERHSPNAKSWTDRVKDLFK.

Belongs to the DnaJ family. In terms of assembly, homodimer. The cofactor is Zn(2+).

It localises to the cytoplasm. Its function is as follows. Participates actively in the response to hyperosmotic and heat shock by preventing the aggregation of stress-denatured proteins and by disaggregating proteins, also in an autonomous, DnaK-independent fashion. Unfolded proteins bind initially to DnaJ; upon interaction with the DnaJ-bound protein, DnaK hydrolyzes its bound ATP, resulting in the formation of a stable complex. GrpE releases ADP from DnaK; ATP binding to DnaK triggers the release of the substrate protein, thus completing the reaction cycle. Several rounds of ATP-dependent interactions between DnaJ, DnaK and GrpE are required for fully efficient folding. Also involved, together with DnaK and GrpE, in the DNA replication of plasmids through activation of initiation proteins. The chain is Chaperone protein DnaJ from Methylibium petroleiphilum (strain ATCC BAA-1232 / LMG 22953 / PM1).